A 98-amino-acid polypeptide reads, in one-letter code: MQPEQIIRRPIILTEKSSRLRDQGNKVIFEVRREANKIQIKDAIQTLFKVGVVDVNTLIMRGKDKRMGRGYAKLRNWKKAIVTLKEGDEIQFFDEKAE.

This sequence belongs to the universal ribosomal protein uL23 family. As to quaternary structure, part of the 50S ribosomal subunit. Contacts protein L29, and trigger factor when it is bound to the ribosome.

One of the early assembly proteins it binds 23S rRNA. One of the proteins that surrounds the polypeptide exit tunnel on the outside of the ribosome. Forms the main docking site for trigger factor binding to the ribosome. The polypeptide is Large ribosomal subunit protein uL23 (Sorangium cellulosum (strain So ce56) (Polyangium cellulosum (strain So ce56))).